The chain runs to 107 residues: Putative pterin-4-alpha-carbinolamine dehydratase (107 aa).

It belongs to the pterin-4-alpha-carbinolamine dehydratase family.

It carries out the reaction (4aS,6R)-4a-hydroxy-L-erythro-5,6,7,8-tetrahydrobiopterin = (6R)-L-erythro-6,7-dihydrobiopterin + H2O. In Paracoccus denitrificans (strain Pd 1222), this protein is Putative pterin-4-alpha-carbinolamine dehydratase.